Here is a 729-residue protein sequence, read N- to C-terminus: 1,4-alpha-glucan branching enzyme GlgB (729 aa).

Asp-405 functions as the Nucleophile in the catalytic mechanism. Residue Glu-458 is the Proton donor of the active site.

This sequence belongs to the glycosyl hydrolase 13 family. GlgB subfamily. As to quaternary structure, monomer.

The catalysed reaction is Transfers a segment of a (1-&gt;4)-alpha-D-glucan chain to a primary hydroxy group in a similar glucan chain.. It participates in glycan biosynthesis; glycogen biosynthesis. In terms of biological role, catalyzes the formation of the alpha-1,6-glucosidic linkages in glycogen by scission of a 1,4-alpha-linked oligosaccharide from growing alpha-1,4-glucan chains and the subsequent attachment of the oligosaccharide to the alpha-1,6 position. The protein is 1,4-alpha-glucan branching enzyme GlgB of Mannheimia succiniciproducens (strain KCTC 0769BP / MBEL55E).